We begin with the raw amino-acid sequence, 431 residues long: Trigger factor (431 aa).

One can recognise a PPIase FKBP-type domain in the interval 163–248; it reads GHFAVIDFTG…LSEIKVKELP (86 aa).

Belongs to the FKBP-type PPIase family. Tig subfamily.

The protein resides in the cytoplasm. The enzyme catalyses [protein]-peptidylproline (omega=180) = [protein]-peptidylproline (omega=0). Its function is as follows. Involved in protein export. Acts as a chaperone by maintaining the newly synthesized protein in an open conformation. Functions as a peptidyl-prolyl cis-trans isomerase. This chain is Trigger factor, found in Geobacter sulfurreducens (strain ATCC 51573 / DSM 12127 / PCA).